Here is a 232-residue protein sequence, read N- to C-terminus: Leucyl/phenylalanyl-tRNA--protein transferase (232 aa).

This sequence belongs to the L/F-transferase family.

The protein resides in the cytoplasm. The enzyme catalyses N-terminal L-lysyl-[protein] + L-leucyl-tRNA(Leu) = N-terminal L-leucyl-L-lysyl-[protein] + tRNA(Leu) + H(+). It catalyses the reaction N-terminal L-arginyl-[protein] + L-leucyl-tRNA(Leu) = N-terminal L-leucyl-L-arginyl-[protein] + tRNA(Leu) + H(+). It carries out the reaction L-phenylalanyl-tRNA(Phe) + an N-terminal L-alpha-aminoacyl-[protein] = an N-terminal L-phenylalanyl-L-alpha-aminoacyl-[protein] + tRNA(Phe). Functionally, functions in the N-end rule pathway of protein degradation where it conjugates Leu, Phe and, less efficiently, Met from aminoacyl-tRNAs to the N-termini of proteins containing an N-terminal arginine or lysine. This is Leucyl/phenylalanyl-tRNA--protein transferase from Nitrosospira multiformis (strain ATCC 25196 / NCIMB 11849 / C 71).